The primary structure comprises 194 residues: 7-methyl-GTP pyrophosphatase (194 aa).

Asp-70 functions as the Proton acceptor in the catalytic mechanism.

The protein belongs to the Maf family. YceF subfamily. A divalent metal cation serves as cofactor.

It is found in the cytoplasm. The catalysed reaction is N(7)-methyl-GTP + H2O = N(7)-methyl-GMP + diphosphate + H(+). Nucleoside triphosphate pyrophosphatase that hydrolyzes 7-methyl-GTP (m(7)GTP). May have a dual role in cell division arrest and in preventing the incorporation of modified nucleotides into cellular nucleic acids. The chain is 7-methyl-GTP pyrophosphatase from Vibrio vulnificus (strain CMCP6).